The following is a 397-amino-acid chain: CCA-adding enzyme (397 aa).

2 residues coordinate ATP: G26 and R29. The CTP site is built by G26 and R29. Residues D39 and D41 each coordinate Mg(2+). Residues R110, D153, R156, R159, and R162 each contribute to the ATP site. CTP is bound by residues R110, D153, R156, R159, and R162.

It belongs to the tRNA nucleotidyltransferase/poly(A) polymerase family. Bacterial CCA-adding enzyme type 3 subfamily. Homodimer. Mg(2+) serves as cofactor.

The enzyme catalyses a tRNA precursor + 2 CTP + ATP = a tRNA with a 3' CCA end + 3 diphosphate. The catalysed reaction is a tRNA with a 3' CCA end + 2 CTP + ATP = a tRNA with a 3' CCACCA end + 3 diphosphate. Catalyzes the addition and repair of the essential 3'-terminal CCA sequence in tRNAs without using a nucleic acid template. Adds these three nucleotides in the order of C, C, and A to the tRNA nucleotide-73, using CTP and ATP as substrates and producing inorganic pyrophosphate. tRNA 3'-terminal CCA addition is required both for tRNA processing and repair. Also involved in tRNA surveillance by mediating tandem CCA addition to generate a CCACCA at the 3' terminus of unstable tRNAs. While stable tRNAs receive only 3'-terminal CCA, unstable tRNAs are marked with CCACCA and rapidly degraded. This Bacillus cereus (strain ATCC 10987 / NRS 248) protein is CCA-adding enzyme.